The following is a 553-amino-acid chain: MLSVRVAAAVARALPRRAGLVSKNALGSSFVGARNLHASNTRLQKTGTAEMSSILEERILGADTSVDLEETGRVLSIGDGIARVHGLRNVQAEEMVEFSSGLKGMSLNLEPDNVGVVVFGNDKLIKEGDVVKRTGAIVDVPVGEELLGRVVDALGNAIDGKGPIGSKTRRRVGLKAPGIIPRISVREPMQTGIKAVDSLVPIGRGQRELIIGDRQTGKTSIAIDTIINQKRFNDGTDEKKKLYCIYVAIGQKRSTVAQLVKRLTDADAMKYTIVVSATASDAAPLQYLAPYSGCSMGEYFRDNGKHALIIYDDLSKQAVAYRQMSLLLRRPPGREAYPGDVFYLHSRLLERAAKMNDSFGGGSLTALPVIETQAGDVSAYIPTNVISITDGQIFLETELFYKGIRPAINVGLSVSRVGSAAQTRAMKQVAGTMKLELAQYREVAAFAQFGSDLDAATQQLLSRGVRLTELLKQGQYSPMAIEEQVAVIYAGVRGYLDKLEPSKITKFENAFLSHVISQHQSLLGNIRSDGKISEQSDAKLKEIVTNFLAGFEP.

The N-terminal 43 residues, 1-43, are a transit peptide targeting the mitochondrion; that stretch reads MLSVRVAAAVARALPRRAGLVSKNALGSSFVGARNLHASNTRL. Phosphoserine is present on residues S53 and S65. A Phosphoserine; alternate modification is found at S76. S76 carries O-linked (GlcNAc) serine; alternate glycosylation. The residue at position 106 (S106) is a Phosphoserine. K123, K126, and K132 each carry N6-acetyllysine. T134 is subject to Phosphothreonine. K161 is modified (N6-acetyllysine; alternate). At K161 the chain carries N6-succinyllysine; alternate. Phosphoserine is present on S166. Residue K167 is modified to N6-acetyllysine; alternate. The residue at position 167 (K167) is an N6-succinyllysine; alternate. S184 is subject to Phosphoserine. Residue R204 is modified to Omega-N-methylarginine. Residues Q215, G217, K218, T219, and S220 each contribute to the ATP site. Mg(2+) is bound at residue T219. An N6-acetyllysine; alternate mark is found at K230 and K239. N6-succinyllysine; alternate is present on residues K230 and K239. K240 is subject to N6-acetyllysine. N6-acetyllysine; alternate occurs at positions 261 and 305. N6-succinyllysine; alternate is present on residues K261 and K305. Residue D312 coordinates Mg(2+). N6-acetyllysine; alternate is present on K427. Residue K427 is modified to N6-succinyllysine; alternate. An N6-acetyllysine modification is found at K434. Residues Q473 and Q475 each contribute to the ATP site. 2 positions are modified to N6-acetyllysine; alternate: K498 and K506. N6-succinyllysine; alternate occurs at positions 498 and 506. Residue S521 is modified to Phosphoserine. K531 and K539 each carry N6-acetyllysine; alternate. N6-succinyllysine; alternate occurs at positions 531 and 539. K541 is modified (N6-acetyllysine).

This sequence belongs to the ATPase alpha/beta chains family. As to quaternary structure, homotrimer. Component of the ATP synthase complex composed at least of ATP5F1A/subunit alpha, ATP5F1B/subunit beta, ATP5MC1/subunit c (homooctomer), MT-ATP6/subunit a, MT-ATP8/subunit 8, ATP5ME/subunit e, ATP5MF/subunit f, ATP5MG/subunit g, ATP5MK/subunit k, ATP5MJ/subunit j, ATP5F1C/subunit gamma, ATP5F1D/subunit delta, ATP5F1E/subunit epsilon, ATP5PF/subunit F6, ATP5PB/subunit b, ATP5PD/subunit d, ATP5PO/subunit OSCP. ATP synthase complex consists of a soluble F(1) head domain (subunits alpha(3) and beta(3)) - the catalytic core - and a membrane F(0) domain - the membrane proton channel (subunits c, a, 8, e, f, g, k and j). These two domains are linked by a central stalk (subunits gamma, delta, and epsilon) rotating inside the F1 region and a stationary peripheral stalk (subunits F6, b, d, and OSCP). Interacts with ATPAF2. Interacts with HRG; the interaction occurs on the surface of T-cells and alters the cell morphology when associated with concanavalin (in vitro). Interacts with PLG (angiostatin peptide); the interaction inhibits most of the angiogenic properties of angiostatin. Interacts with BLOC1S1. Interacts with BCL2L1 isoform BCL-X(L); the interaction mediates the association of BCL2L1 isoform BCL-X(L) with the mitochondrial membrane F(1)F(0) ATP synthase and enhances neurons metabolic efficiency. Interacts with CLN5 and PPT1. Interacts with S100A1; this interaction increases F1-ATPase activity. Interacts with ABCB7; this interaction allows the regulation of cellular iron homeostasis and cellular reactive oxygen species (ROS) levels in cardiomyocytes. In terms of processing, acetylated on lysine residues. BLOC1S1 is required for acetylation. Acetylation of Lys-132, Lys-230 and Lys-498 is observed in liver mitochondria from fasted mice but not from fed mice.

Its subcellular location is the mitochondrion inner membrane. It is found in the cell membrane. In terms of biological role, subunit alpha, of the mitochondrial membrane ATP synthase complex (F(1)F(0) ATP synthase or Complex V) that produces ATP from ADP in the presence of a proton gradient across the membrane which is generated by electron transport complexes of the respiratory chain. ATP synthase complex consist of a soluble F(1) head domain - the catalytic core - and a membrane F(1) domain - the membrane proton channel. These two domains are linked by a central stalk rotating inside the F(1) region and a stationary peripheral stalk. During catalysis, ATP synthesis in the catalytic domain of F(1) is coupled via a rotary mechanism of the central stalk subunits to proton translocation. In vivo, can only synthesize ATP although its ATP hydrolase activity can be activated artificially in vitro. With the catalytic subunit beta (ATP5F1B), forms the catalytic core in the F(1) domain. Subunit alpha does not bear the catalytic high-affinity ATP-binding sites. The chain is ATP synthase F(1) complex subunit alpha, mitochondrial from Mus musculus (Mouse).